The primary structure comprises 668 residues: MKKLRYVHLNLLLLLLPLINLQFPTLSLAQDYDEPKKDDTPPPGLARCNGVYMSYSSGGREKLYPRTTNATAQAWSFKSTAMIVNTGIEEVKGWQMFVGFHHREIIVSATGAVSSDGDFPVDATNGTTFIGSQNTDLKTSILTAGDYTQISTNIEITGTVFGGKGTATPMPKSIKLTNDGWQCPAATSKGGTMQVCCKRNPKFKAKEKVKTKFMPRQHGDLNIIYDVLQAYASSYMAQVTIDNTSPLGRLDHWNLTWEWMRGEFIHSMRGAYAAEKNTLECLSSKAGQFYGDLDFSQVANCQKKPIIKDLPAERKDDNVTGKLPFCCKNGTLLPTHMDPSKSKAIFQLQVYKVPPDQNRTAFFPPRNWKIDGIVNPTYKCGPPIRVDATPFPDPSGLQATTYAIASWQVICNITKPKPQAARCCVSFSAFYNDSAIPCNTCACGCKDIDTDTCNANARQLLLPTDTLLVPFDNRTLKAKVWAKQKHMAYPKKLPCPDNCGISLNWHLNSDYGNGWSARVTLFNWGNNAVEDWFGALDLGKAGLGYENIYSFNGSRVPPKNQTIFFQGLPGMNYLIGITNGTNPARDPQIPGKMQSVISFKKKNLGSLNIIGGDGFPKRVFFNGEECELPKYFPKKSSGMRLSGIRFLPSILLAITTFHAITDRLLTGV.

The first 29 residues, 1 to 29, serve as a signal peptide directing secretion; it reads MKKLRYVHLNLLLLLLPLINLQFPTLSLA. 12 N-linked (GlcNAc...) asparagine glycosylation sites follow: N69, N125, N254, N318, N329, N358, N412, N432, N473, N552, N560, and N579. S636 carries GPI-anchor amidated serine lipidation. Positions 637–668 are cleaved as a propeptide — removed in mature form; that stretch reads SGMRLSGIRFLPSILLAITTFHAITDRLLTGV.

It belongs to the COBRA family. As to expression, mostly expressed in flowers, stamen, anthers and pollen, and, to a lower extent, possibly in roots, stems, leaves and siliques.

It localises to the cell membrane. In terms of biological role, involved in the deposition of apical pectin cap and cellulose microfibrils in pollen tubes. Implicated in pollen tubes growth in the female transmitting tract of pistil and toward micropyles, via the perception of ovule guidance cues. This chain is COBRA-like protein 11, found in Arabidopsis thaliana (Mouse-ear cress).